Here is a 976-residue protein sequence, read N- to C-terminus: SAGGISVPGPMGPSGPRGLPGPPGAPGPQGFQGPPGEPGEPGSGPMGPRGPPGPPGKNGDDGEAGKPGRPGERGPPGPQGARGLPGTAGLPGMKGHRGFSGLDGAKGDAGPAGPKGAPGQMGPRGPGERGRPGASGPAGARGNDGATGAAGPPGPTGPAGPPGFPGAVGAKGEAGPQGARGSEGPQGVRGEPGPPGPAGAAGPAGNPGADGQPGAKGANGAPGIAGAPGFPGARGPSGPQGPSGPPGPKGNSGEPGAPGSKAKGEPGPTGIQGPPGPAGEEGKRGARGEPGPTGLPGPGERGGPGSRGFPGADGVAGPKGPAGERGSPGPAGPKGSPGEAGRPGEAGLPGAKGLTGSPGSPGPDGKTGPPGPAGQDGRPGPPGPPGARGQAGVMGFPGPKGAAGEPGKAGERGVPGPPGAVGPAGKDGEAGAQGPPGPAGPAGERGEQGPAGPGFQGLPGPAGPPGEAGKPGEQGVPGDLGAPGPSGARGERGFPGERGVQGPPGPAGPRGSSQGAPGLQGMPGERGAAGLPGPKGDRGDAGPKGADGAPGKDGVRGLTGPIGPPGPAGAPGDKGESGPSGPAGPTGARGAPGDRGEPGPPGPAGFAGPPGADGQPGAKGEPGDAGAKGDAGPPGPAGPTGAPGPIGNLGAPGPKGARGSAGPPGATGFPGAAGRVGPPGPSGNAGPPGPPGPVGKEGGKGPRGETGPAGEVGPPGPPGPGEKGSPGADGPAGAPGTPGPQGISGQRGVVGLPGQRGERGFPGLPGPSGEPGKQGPSGSSGERGPPGPMGPPGLAGPPGESGREGPGAEGSPGRDGSPGPKGDRGETGPGPPGAPGAPGAPGPVGPAGKSGDRGETGPGPAGPAGPAGARGPAGPQGPRGDKGETGEQGDRGIKRGFSGLQGPAGPPGSPGEQGPSGASGPAGPRGPPGSAGSPGKDGLNGLPGPIGPPGPRGRTGDAGPVGPPGPPGPPGPPGPP.

Position 1 is a phosphoserine (Ser1). A disordered region spans residues 1-976 (SAGGISVPGP…PGPPGPPGPP (976 aa)). 4-hydroxyproline occurs at positions 20, 23, 26, 35, 38, 41, 55, 70, 76, 85, and 91. Residues 58–72 (NGDDGEAGKPGRPGE) are compositionally biased toward basic and acidic residues. Residue Lys94 is modified to 5-hydroxylysine; alternate. O-linked (Gal...) hydroxylysine; alternate glycosylation occurs at Lys94. Ser100 is modified (phosphoserine). Low complexity-rich tracts occupy residues 108-118 (DAGPAGPKGAP) and 132-150 (PGAS…TGAA). A 4-hydroxyproline mark is found at Pro118, Pro132, Pro153, Pro162, Pro165, Pro192, Pro195, Pro207, Pro213, Pro222, Pro228, Pro231, and Pro246. Over residues 152 to 164 (PPGPTGPAGPPGF) the composition is skewed to pro residues. Residues 198 to 237 (AGAAGPAGNPGADGQPGAKGANGAPGIAGAPGFPGARGPS) are compositionally biased toward low complexity. Lys249 is modified (5-hydroxylysine). Residues Pro255, Pro258, Pro266, Pro275, Pro290, Pro296, Pro304, and Pro310 each carry the 4-hydroxyproline modification. A compositionally biased stretch (gly residues) spans 294-308 (GLPGPGERGGPGSRG). A 5-hydroxylysine modification is found at Lys319. Residues Pro328, Pro337, Pro343, Pro349, Pro358, Pro361, Pro370, Pro379, Pro385, Pro397, Pro406, Pro415, Pro418, Pro436, Pro453, Pro459, Pro465, Pro471, Pro477, Pro483, Pro495, Pro504, Pro517, Pro523, and Pro532 each carry the 4-hydroxyproline modification. The span at 352–378 (KGLTGSPGSPGPDGKTGPPGPAGQDGR) shows a compositional bias: low complexity. Residues 387–406 (ARGQAGVMGFPGPKGAAGEP) show a composition bias toward low complexity. Residues 465 to 474 (PGEAGKPGEQ) are compositionally biased toward low complexity. Lys544 carries the post-translational modification 5-hydroxylysine. 4-hydroxyproline occurs at positions 550, 565, and 571. The segment covering 577-591 (SGPSGPAGPTGARGA) has biased composition (low complexity). Ser580 carries the post-translational modification Phosphoserine. 8 positions are modified to 4-hydroxyproline: Pro592, Pro598, Pro601, Pro610, Pro616, Pro634, Pro643, and Pro652. Residues 604–631 (AGFAGPPGADGQPGAKGEPGDAGAKGDA) show a composition bias toward low complexity. Lys655 carries the 5-hydroxylysine modification. The segment covering 660–676 (SAGPPGATGFPGAAGRV) has biased composition (low complexity). 4-hydroxyproline occurs at positions 664 and 670. The residue at position 678 (Pro678) is a 3-hydroxyproline. Residues Pro679, Pro688, Pro691, Pro718, Pro726, Pro735, Pro753, Pro762, Pro765, Pro771, Pro786, Pro792, Pro798, Pro806, and Pro812 each carry the 4-hydroxyproline modification. Residues 723-735 (KGSPGADGPAGAP) show a composition bias toward low complexity. Pro residues predominate over residues 785-795 (PPGPMGPPGLA). At Lys821 the chain carries 5-hydroxylysine. Pro residues predominate over residues 829 to 844 (PGPPGAPGAPGAPGPV). Residues Pro832, Pro835, and Pro838 each carry the 4-hydroxyproline modification. Residues 864 to 878 (AGPAGARGPAGPQGP) show a composition bias toward low complexity. Residues 879-893 (RGDKGETGEQGDRGI) show a composition bias toward basic and acidic residues. Lys882 bears the 5-hydroxylysine mark. Lys894 is subject to 5-hydroxylysine; alternate. Lys894 carries an O-linked (Gal...) hydroxylysine; alternate glycan. A 4-hydroxyproline mark is found at Pro907, Pro910, Pro928, and Pro943. Residues 910-943 (PGEQGPSGASGPAGPRGPPGSAGSPGKDGLNGLP) are compositionally biased toward low complexity. At Pro948 the chain carries 3-hydroxyproline. Residue Pro949 is modified to 4-hydroxyproline. The segment covering 961 to 976 (VGPPGPPGPPGPPGPP) has biased composition (pro residues). A 3-hydroxyproline modification is found at Pro963. 4-hydroxyproline is present on Pro964. Pro966 is subject to 3-hydroxyproline. Pro967 is modified (4-hydroxyproline). 3-hydroxyproline is present on Pro969. 4-hydroxyproline is present on residues Pro970, Pro973, and Pro976.

It belongs to the fibrillar collagen family. In terms of assembly, trimers of one alpha 2(I) and two alpha 1(I) chains. Contains mostly 4-hydroxyproline. Proline residues at the third position of the tripeptide repeating unit (G-X-Y) are hydroxylated in some or all of the chains. In terms of processing, contains 3-hydroxyproline at a few sites. This modification occurs on the first proline residue in the sequence motif Gly-Pro-Hyp, where Hyp is 4-hydroxyproline. Post-translationally, lysine residues at the third position of the tripeptide repeating unit (G-X-Y) are 5-hydroxylated in some or all of the chains. O-glycosylated on hydroxylated lysine residues. The O-linked glycan consists of a Glc-Gal disaccharide. In terms of tissue distribution, expressed in bones.

The protein localises to the secreted. It localises to the extracellular space. The protein resides in the extracellular matrix. Its function is as follows. Type I collagen is a member of group I collagen (fibrillar forming collagen). This is Collagen alpha-1(I) chain from Acratocnus ye (Hispaniolan ground sloth).